A 308-amino-acid polypeptide reads, in one-letter code: Acetylglutamate kinase (308 aa).

Residues 86-87 (GG), Arg108, and Asn201 contribute to the substrate site.

The protein belongs to the acetylglutamate kinase family. ArgB subfamily.

The protein localises to the cytoplasm. The enzyme catalyses N-acetyl-L-glutamate + ATP = N-acetyl-L-glutamyl 5-phosphate + ADP. It participates in amino-acid biosynthesis; L-arginine biosynthesis; N(2)-acetyl-L-ornithine from L-glutamate: step 2/4. Functionally, catalyzes the ATP-dependent phosphorylation of N-acetyl-L-glutamate. The protein is Acetylglutamate kinase of Prochlorococcus marinus (strain MIT 9313).